Consider the following 238-residue polypeptide: Ribonuclease PH (238 aa).

Phosphate is bound by residues R86 and 124–126 (GTR).

Belongs to the RNase PH family. In terms of assembly, homohexameric ring arranged as a trimer of dimers.

It carries out the reaction tRNA(n+1) + phosphate = tRNA(n) + a ribonucleoside 5'-diphosphate. Functionally, phosphorolytic 3'-5' exoribonuclease that plays an important role in tRNA 3'-end maturation. Removes nucleotide residues following the 3'-CCA terminus of tRNAs; can also add nucleotides to the ends of RNA molecules by using nucleoside diphosphates as substrates, but this may not be physiologically important. Probably plays a role in initiation of 16S rRNA degradation (leading to ribosome degradation) during starvation. This Aliivibrio fischeri (strain ATCC 700601 / ES114) (Vibrio fischeri) protein is Ribonuclease PH.